Consider the following 433-residue polypeptide: Pyrimidine-nucleoside phosphorylase (433 aa).

Residue 81–83 (KHS) participates in phosphate binding. K(+) contacts are provided by Gly88 and Thr90. Phosphate contacts are provided by residues Thr92, 108–110 (KMS), and Thr120. The substrate site is built by Arg168 and Lys187. K(+)-binding residues include Leu243, Ala246, and Glu255.

This sequence belongs to the thymidine/pyrimidine-nucleoside phosphorylase family. In terms of assembly, homodimer. It depends on K(+) as a cofactor.

It carries out the reaction uridine + phosphate = alpha-D-ribose 1-phosphate + uracil. It catalyses the reaction thymidine + phosphate = 2-deoxy-alpha-D-ribose 1-phosphate + thymine. The enzyme catalyses 2'-deoxyuridine + phosphate = 2-deoxy-alpha-D-ribose 1-phosphate + uracil. Its function is as follows. Catalyzes phosphorolysis of the pyrimidine nucleosides uridine, thymidine and 2'-deoxyuridine with the formation of the corresponding pyrimidine base and ribose-1-phosphate. In Staphylococcus epidermidis (strain ATCC 12228 / FDA PCI 1200), this protein is Pyrimidine-nucleoside phosphorylase (pdp).